The primary structure comprises 631 residues: Guanylate-binding protein 4 (631 aa).

One can recognise a GB1/RHD3-type G domain in the interval 33–283 (SQPVVVVAIV…FASYIFTYAK (251 aa)). Residues 43–50 (GWSHTGKS) and 103–107 (DTEGL) each bind GTP. A coiled-coil region spans residues 492–592 (IAEKHTKKEA…GHNIKEMKQN (101 aa)).

It belongs to the TRAFAC class dynamin-like GTPase superfamily. GB1/RHD3 GTPase family. GB1 subfamily. Heterodimer with other family members, including GBP1, GBP2 and GBP5. Dimerization regulates subcellular location. Interacts with IRF7; preventing interaction between TRAF6 and IRF7, resulting in impaired TRAF6-mediated IRF7 ubiquitination. In terms of tissue distribution, mainly expressed in organs of the immune system, such as spleen and lymph nodes.

The protein localises to the golgi apparatus membrane. It localises to the cytoplasm. It is found in the nucleus. Its subcellular location is the perinuclear region. It catalyses the reaction GTP + H2O = GDP + phosphate + H(+). Its function is as follows. Interferon (IFN)-inducible GTPase that plays important roles in innate immunity against a diverse range of bacterial, viral and protozoan pathogens. Negatively regulates the antiviral response by inhibiting activation of IRF7 transcription factor. This is Guanylate-binding protein 4 from Mus musculus (Mouse).